A 203-amino-acid chain; its full sequence is Cytochrome c oxidase assembly protein CtaG (203 aa).

Over 1–19 (MDAGKAERRAGNGRRTDGR) the chain is Cytoplasmic. Residues 20–42 (RHLVVAAACAAFIAAMVGVTYAS) form a helical; Signal-anchor for type II membrane protein membrane-spanning segment. Topologically, residues 43-203 (VPLYAMFCAL…AAARASGTGG (161 aa)) are periplasmic.

Belongs to the COX11/CtaG family.

The protein localises to the cell inner membrane. Exerts its effect at some terminal stage of cytochrome c oxidase synthesis, probably by being involved in the insertion of the copper B into subunit I. This Xanthobacter autotrophicus (strain ATCC BAA-1158 / Py2) protein is Cytochrome c oxidase assembly protein CtaG.